A 360-amino-acid chain; its full sequence is DNA replication and repair protein RecF (360 aa).

Glycine 33–threonine 40 contacts ATP.

The protein belongs to the RecF family.

Its subcellular location is the cytoplasm. In terms of biological role, the RecF protein is involved in DNA metabolism; it is required for DNA replication and normal SOS inducibility. RecF binds preferentially to single-stranded, linear DNA. It also seems to bind ATP. The polypeptide is DNA replication and repair protein RecF (Rickettsia massiliae (strain Mtu5)).